Consider the following 1218-residue polypeptide: Coatomer subunit alpha-3 (1218 aa).

WD repeat units lie at residues 7 to 48, 49 to 88, 91 to 132, 133 to 172, 202 to 241, 246 to 285, 288 to 326, 363 to 404, and 450 to 489; these read TKSN…DRFD, EHDGPVRGVHFHATQPLFVSGGDDYKIKVWNYKTHRCLFT, GHLD…AVLT, GHNHYVMCASFHPKEDLVVSASLDQTVRVWDIGALRKKTV, GHDRGVNWASFHPTLPLIVSGADDRQVKLWRMNDTKAWEV, GHMNNVSCVMFHAKQDIIVSNSEDKSIRVWDATKRTGIQT, REHDRFWILAAHPEMNLLAAGHDNGMIVFKLERERPAFS, SLNQ…AGRT, and PLPIAMDAIYYAGTGNLLCKAEDRVTIFDLQQRLILGELQ. The tract at residues 854–893 is disordered; the sequence is AMANGGDGFDAEEGEANEEDGEEGGWDLEDLELPPEAETP. Over residues 862–888 the composition is skewed to acidic residues; the sequence is FDAEEGEANEEDGEEGGWDLEDLELPP.

In terms of assembly, oligomeric complex that consists of at least the alpha, beta, beta', gamma, delta, epsilon and zeta subunits.

It localises to the cytoplasm. The protein resides in the golgi apparatus membrane. It is found in the cytoplasmic vesicle. The protein localises to the COPI-coated vesicle membrane. Its function is as follows. The coatomer is a cytosolic protein complex that binds to dilysine motifs and reversibly associates with Golgi non-clathrin-coated vesicles, which further mediate biosynthetic protein transport from the ER, via the Golgi up to the trans Golgi network. Coatomer complex is required for budding from Golgi membranes, and is essential for the retrograde Golgi-to-ER transport of dilysine-tagged proteins. The protein is Coatomer subunit alpha-3 of Oryza sativa subsp. japonica (Rice).